Here is an 80-residue protein sequence, read N- to C-terminus: Protein KorB (80 aa).

2 consecutive DNA-binding regions (H-T-H motif) follow at residues Ala-13–Asp-32 and Asn-56–Glu-75.

Its function is as follows. Repressor for the transcription of certain pIJ101 promoters, including those the from kilA and kilB loci. This is Protein KorB (korB) from Streptomyces lividans.